Here is a 185-residue protein sequence, read N- to C-terminus: Peptidyl-tRNA hydrolase (185 aa).

Y14 is a tRNA binding site. H19 functions as the Proton acceptor in the catalytic mechanism. TRNA contacts are provided by F64, N66, and N112.

It belongs to the PTH family. In terms of assembly, monomer.

The protein resides in the cytoplasm. The catalysed reaction is an N-acyl-L-alpha-aminoacyl-tRNA + H2O = an N-acyl-L-amino acid + a tRNA + H(+). In terms of biological role, hydrolyzes ribosome-free peptidyl-tRNAs (with 1 or more amino acids incorporated), which drop off the ribosome during protein synthesis, or as a result of ribosome stalling. Its function is as follows. Catalyzes the release of premature peptidyl moieties from peptidyl-tRNA molecules trapped in stalled 50S ribosomal subunits, and thus maintains levels of free tRNAs and 50S ribosomes. The protein is Peptidyl-tRNA hydrolase of Levilactobacillus brevis (strain ATCC 367 / BCRC 12310 / CIP 105137 / JCM 1170 / LMG 11437 / NCIMB 947 / NCTC 947) (Lactobacillus brevis).